The following is a 161-amino-acid chain: MSGHGAPAPAPVDCSDLRVAVVAASWHTQVMDGLIAGAQRALADYHVAEHRLVRVPGAFELAVVADALARQHYDVVVALGVVIRGGTPHFDYVCQAVTEGLVRVALDRSLPVGFGVLTCDGDQQALDRAGLEGSKEDKGYEATSAALLTARTLKELGTTAP.

5-amino-6-(D-ribitylamino)uracil-binding positions include tryptophan 26, 58-60 (AFE), and 81-83 (VVI). 86-87 (GT) is a binding site for (2S)-2-hydroxy-3-oxobutyl phosphate. Histidine 89 (proton donor) is an active-site residue. Phenylalanine 114 provides a ligand contact to 5-amino-6-(D-ribitylamino)uracil. Arginine 128 is a (2S)-2-hydroxy-3-oxobutyl phosphate binding site.

It belongs to the DMRL synthase family.

The catalysed reaction is (2S)-2-hydroxy-3-oxobutyl phosphate + 5-amino-6-(D-ribitylamino)uracil = 6,7-dimethyl-8-(1-D-ribityl)lumazine + phosphate + 2 H2O + H(+). It functions in the pathway cofactor biosynthesis; riboflavin biosynthesis; riboflavin from 2-hydroxy-3-oxobutyl phosphate and 5-amino-6-(D-ribitylamino)uracil: step 1/2. Functionally, catalyzes the formation of 6,7-dimethyl-8-ribityllumazine by condensation of 5-amino-6-(D-ribitylamino)uracil with 3,4-dihydroxy-2-butanone 4-phosphate. This is the penultimate step in the biosynthesis of riboflavin. The chain is 6,7-dimethyl-8-ribityllumazine synthase from Nocardioides sp. (strain ATCC BAA-499 / JS614).